A 315-amino-acid chain; its full sequence is piRNA biogenesis protein EXD1 (315 aa).

Positions 141-228 (IYIFDIQVMQ…ECLTNYLGLQ (88 aa)) constitute a 3'-5' exonuclease domain.

The protein belongs to the EXD1 family. As to quaternary structure, homodimer. Component of the PET complex, at least composed of EXD1, SIWI, TDRD12 and piRNAs.

Its subcellular location is the cytoplasm. Functionally, RNA-binding component of the PET complex, a multiprotein complex required for the processing of piRNAs during spermatogenesis. The piRNA metabolic process mediates the repression of transposable elements during meiosis by forming complexes composed of piRNAs and Piwi proteins and governs the methylation and subsequent repression of transposable elements, preventing their mobilization, which is essential for the germline integrity. The PET complex is required during the secondary piRNAs metabolic process for the PIWIL2 slicing-triggered loading of PIWIL4 piRNAs. In the PET complex, EXD1 probably acts as an RNA adapter. EXD1 is an inactive exonuclease. In Bombyx mori (Silk moth), this protein is piRNA biogenesis protein EXD1.